The chain runs to 86 residues: Toxin Aam3 (86 aa).

The signal sequence occupies residues 1 to 19 (MNYLVMISLALLFMIGVES). The region spanning 21-85 (RDGYIAQPNN…PIKIIGQKCT (65 aa)) is the LCN-type CS-alpha/beta domain. Disulfide bonds link cysteine 31–cysteine 84, cysteine 35–cysteine 56, cysteine 42–cysteine 66, and cysteine 46–cysteine 68.

This sequence belongs to the long (4 C-C) scorpion toxin superfamily. Sodium channel inhibitor family. Alpha subfamily. In terms of processing, the C-terminal basic residue is removed by a carboxypeptidase. In terms of tissue distribution, expressed by the venom gland.

The protein resides in the secreted. Functionally, alpha toxins bind voltage-independently at site-3 of sodium channels (Nav) and inhibit the inactivation of the activated channels, thereby blocking neuronal transmission. This Androctonus amoreuxi (African fattail scorpion) protein is Toxin Aam3.